The primary structure comprises 191 residues: Large ribosomal subunit protein uL6B (191 aa).

The protein belongs to the universal ribosomal protein uL6 family. As to quaternary structure, component of the large ribosomal subunit (LSU). Mature yeast ribosomes consist of a small (40S) and a large (60S) subunit. The 40S small subunit contains 1 molecule of ribosomal RNA (18S rRNA) and 33 different proteins (encoded by 57 genes). The large 60S subunit contains 3 rRNA molecules (25S, 5.8S and 5S rRNA) and 46 different proteins (encoded by 81 genes).

It localises to the cytoplasm. In terms of biological role, component of the ribosome, a large ribonucleoprotein complex responsible for the synthesis of proteins in the cell. The small ribosomal subunit (SSU) binds messenger RNAs (mRNAs) and translates the encoded message by selecting cognate aminoacyl-transfer RNA (tRNA) molecules. The large subunit (LSU) contains the ribosomal catalytic site termed the peptidyl transferase center (PTC), which catalyzes the formation of peptide bonds, thereby polymerizing the amino acids delivered by tRNAs into a polypeptide chain. The nascent polypeptides leave the ribosome through a tunnel in the LSU and interact with protein factors that function in enzymatic processing, targeting, and the membrane insertion of nascent chains at the exit of the ribosomal tunnel. This chain is Large ribosomal subunit protein uL6B, found in Saccharomyces cerevisiae (strain ATCC 204508 / S288c) (Baker's yeast).